The primary structure comprises 294 residues: tRNA-cytidine(32) 2-sulfurtransferase (294 aa).

Positions 70–75 match the PP-loop motif motif; the sequence is SGGKDS. Positions 145, 148, and 236 each coordinate [4Fe-4S] cluster.

The protein belongs to the TtcA family. In terms of assembly, homodimer. The cofactor is Mg(2+). It depends on [4Fe-4S] cluster as a cofactor.

The protein localises to the cytoplasm. It carries out the reaction cytidine(32) in tRNA + S-sulfanyl-L-cysteinyl-[cysteine desulfurase] + AH2 + ATP = 2-thiocytidine(32) in tRNA + L-cysteinyl-[cysteine desulfurase] + A + AMP + diphosphate + H(+). The protein operates within tRNA modification. Catalyzes the ATP-dependent 2-thiolation of cytidine in position 32 of tRNA, to form 2-thiocytidine (s(2)C32). The sulfur atoms are provided by the cysteine/cysteine desulfurase (IscS) system. This Rhizobium meliloti (strain 1021) (Ensifer meliloti) protein is tRNA-cytidine(32) 2-sulfurtransferase.